The primary structure comprises 207 residues: Large ribosomal subunit protein uL4 (207 aa).

Residues 53–85 form a disordered region; that stretch reads ERSDVARTGKKFGRQKGGGTARHGDRKAPIFIG.

Belongs to the universal ribosomal protein uL4 family. In terms of assembly, part of the 50S ribosomal subunit.

Its function is as follows. One of the primary rRNA binding proteins, this protein initially binds near the 5'-end of the 23S rRNA. It is important during the early stages of 50S assembly. It makes multiple contacts with different domains of the 23S rRNA in the assembled 50S subunit and ribosome. In terms of biological role, forms part of the polypeptide exit tunnel. The polypeptide is Large ribosomal subunit protein uL4 (Novosphingobium aromaticivorans (strain ATCC 700278 / DSM 12444 / CCUG 56034 / CIP 105152 / NBRC 16084 / F199)).